A 329-amino-acid polypeptide reads, in one-letter code: Probable fructokinase-2 (329 aa).

This sequence belongs to the carbohydrate kinase PfkB family.

The enzyme catalyses D-fructose + ATP = D-fructose 6-phosphate + ADP + H(+). It participates in glycan biosynthesis; starch biosynthesis. May play an important role in maintaining the flux of carbon towards starch formation. In Arabidopsis thaliana (Mouse-ear cress), this protein is Probable fructokinase-2.